A 318-amino-acid polypeptide reads, in one-letter code: GTP 3',8-cyclase (318 aa).

Residues 4–218 (KHGRNIDYLR…MSRSDLIPIE (215 aa)) enclose the Radical SAM core domain. GTP is bound at residue arginine 13. Residues cysteine 20 and cysteine 24 each contribute to the [4Fe-4S] cluster site. Tyrosine 26 is a binding site for S-adenosyl-L-methionine. Position 27 (cysteine 27) interacts with [4Fe-4S] cluster. GTP is bound at residue arginine 62. Glycine 66 contacts S-adenosyl-L-methionine. Threonine 93 is a GTP binding site. Residue serine 117 participates in S-adenosyl-L-methionine binding. Position 154 (lysine 154) interacts with GTP. Methionine 188 is an S-adenosyl-L-methionine binding site. [4Fe-4S] cluster contacts are provided by cysteine 248 and cysteine 251. 253 to 255 (KIR) is a binding site for GTP. Cysteine 265 lines the [4Fe-4S] cluster pocket.

This sequence belongs to the radical SAM superfamily. MoaA family. Monomer and homodimer. Requires [4Fe-4S] cluster as cofactor.

It carries out the reaction GTP + AH2 + S-adenosyl-L-methionine = (8S)-3',8-cyclo-7,8-dihydroguanosine 5'-triphosphate + 5'-deoxyadenosine + L-methionine + A + H(+). It functions in the pathway cofactor biosynthesis; molybdopterin biosynthesis. Its function is as follows. Catalyzes the cyclization of GTP to (8S)-3',8-cyclo-7,8-dihydroguanosine 5'-triphosphate. The polypeptide is GTP 3',8-cyclase (Clostridium acetobutylicum (strain ATCC 824 / DSM 792 / JCM 1419 / IAM 19013 / LMG 5710 / NBRC 13948 / NRRL B-527 / VKM B-1787 / 2291 / W)).